The sequence spans 1316 residues: MLDVNFFDELRIGLATAEDIRQWSYGEVKKPETINYRTLKPEKDGLFCEKIFGPTRDWECYCGKYKRVRFKGIICERCGVEVTRAKVRRERMGHIELAAPVTHIWYFKGVPSRLGYLLDLAPKDLEKIIYFAAYVITSVDEEMRHNELSTLEAEMMVERKAVEDQRDADLEARAQKLEADLAELEAEGAKADARRKVRDSGEREMRQIRDRAQRELDRLEDIWNTFTKLAPKQLIVDENLYRELVDRYGEYFTGAMGAESIQKLIENFDIDAEAEQLRDVIRNGKGQKKLRALKRLKVVAAFQQSGNSPMGMVLDAVPVIPPELRPMVQLDGGRFATSDLNDLYRRVINRNNRLKRLIDLGAPEIIVNNEKRMLQESVDALFDNGRRGRPVTGPGNRPLKSLSDLLKGKQGRFRQNLLGKRVDYSGRSVIVVGPQLKLHQCGLPKLMALELFKPFVMKRLVDLNHAQNIKSAKRMVERQRPQVWDVLEEVIAEHPVLLNRAPTLHRLGIQAFEPMLVEGKAIQLHPLVCEAFNADFDGDQMAVHLPLSAEAQAEARILMLSSNNILSPASGRPLAMPRLDMVTGLYYLTTEVEGDKGEYSPAAKDRPETGVYSSPAEAIMAADRGVLSVRAKIKVRLTQLRPPAEIEAELFGANGWQPGDAWMAETTLGRVLFNELLPVGYPFVNKQMHKKVQASIINDLAERYPMIVVAQTVDKLKDAGFYWATRSGVTVSMADVLVPPRKKEILDQYEERAEKVEKQFQRGALNHDERNEALVEIWKEATDEVGQALREHYPADNPIITIVDSGATGNFTQTRTLAGMKGLVTNPKGEFIPRPVKSSFREGLTVLEYFINTHGARKGLADTALRTADSGYLTRRLVDVSQDVIVREHDCETERGIVVELAERQPDGTLIRDPYIETSAYARTLGTDAVDEAGNVIVARGEDLGDPEIDALLAAGITSVKVRSVLTCTTGTGVCATCYGRSMATGKLVDIGEAVGIVAAQSIGEPGTQLTMRTFHQGGVGEDITGGLPRVQELFEARIPRGKAPIADVTGRVRLEDGERFYKITIVPDDGSEEVVYDKLSKRQRLRVFKHEDGSERVLSDGDHVEVGQQLMEGSADPHEVLRVQGPREVQIHLVREVQEVYRAQGVSIHDKHIEVIVRQMLRRVTIIDSGSTEFLPGSLIDRAEFEAENRRVVAEGGEPAAGRPVLMGITKASLATDSWLSAASFQETTRVLTDAAINCRSDKLNGLKENVIIGKLIPAGTGINRYRNIQVQPTEEARAAAYTIPSYEDQYYSPDFGQATGAAVPLDDYGYSDYR.

Positions 60, 62, 75, and 78 each coordinate Zn(2+). Residues Asp535, Asp537, and Asp539 each coordinate Mg(2+). Residues Cys891, Cys968, Cys975, and Cys978 each coordinate Zn(2+).

The protein belongs to the RNA polymerase beta' chain family. In terms of assembly, the RNAP catalytic core consists of 2 alpha, 1 beta, 1 beta' and 1 omega subunit. When a sigma factor is associated with the core the holoenzyme is formed, which can initiate transcription. It depends on Mg(2+) as a cofactor. Zn(2+) is required as a cofactor.

The enzyme catalyses RNA(n) + a ribonucleoside 5'-triphosphate = RNA(n+1) + diphosphate. In terms of biological role, DNA-dependent RNA polymerase catalyzes the transcription of DNA into RNA using the four ribonucleoside triphosphates as substrates. This Mycolicibacterium paratuberculosis (strain ATCC BAA-968 / K-10) (Mycobacterium paratuberculosis) protein is DNA-directed RNA polymerase subunit beta'.